The sequence spans 859 residues: Leucine--tRNA ligase (859 aa).

A 'HIGH' region motif is present at residues 42–52 (PYPSGRLHMGH). The short motif at 618–622 (KMSKS) is the 'KMSKS' region element. Lys-621 contacts ATP.

The protein belongs to the class-I aminoacyl-tRNA synthetase family.

The protein localises to the cytoplasm. It carries out the reaction tRNA(Leu) + L-leucine + ATP = L-leucyl-tRNA(Leu) + AMP + diphosphate. This chain is Leucine--tRNA ligase, found in Shewanella sp. (strain MR-7).